A 273-amino-acid polypeptide reads, in one-letter code: Thymidylate synthase (273 aa).

Arginine 31 is a binding site for dUMP. Residue histidine 61 participates in (6R)-5,10-methylene-5,6,7,8-tetrahydrofolate binding. Residue 136–137 (RR) participates in dUMP binding. The active-site Nucleophile is the cysteine 156. Residues 176–179 (RSAD), asparagine 187, and 217–219 (HIY) each bind dUMP. A (6R)-5,10-methylene-5,6,7,8-tetrahydrofolate-binding site is contributed by aspartate 179. Residue alanine 272 coordinates (6R)-5,10-methylene-5,6,7,8-tetrahydrofolate.

It belongs to the thymidylate synthase family. Bacterial-type ThyA subfamily. As to quaternary structure, homodimer.

The protein resides in the cytoplasm. It carries out the reaction dUMP + (6R)-5,10-methylene-5,6,7,8-tetrahydrofolate = 7,8-dihydrofolate + dTMP. It functions in the pathway pyrimidine metabolism; dTTP biosynthesis. Its function is as follows. Catalyzes the reductive methylation of 2'-deoxyuridine-5'-monophosphate (dUMP) to 2'-deoxythymidine-5'-monophosphate (dTMP) while utilizing 5,10-methylenetetrahydrofolate (mTHF) as the methyl donor and reductant in the reaction, yielding dihydrofolate (DHF) as a by-product. This enzymatic reaction provides an intracellular de novo source of dTMP, an essential precursor for DNA biosynthesis. In Corynebacterium jeikeium (strain K411), this protein is Thymidylate synthase.